Here is an 821-residue protein sequence, read N- to C-terminus: KN motif and ankyrin repeat domain-containing protein 3 (821 aa).

Polar residues predominate over residues 1 to 10; it reads MAKFALNQNL. Disordered regions lie at residues 1–36, 58–184, 224–333, and 385–547; these read MAKF…PYSV, GPAA…AQLQ, LLAG…APET, and AAEE…GRCE. Positions 77–88 are enriched in low complexity; the sequence is RPGLAGARSPGA. The segment covering 128-150 has biased composition (basic and acidic residues); sequence PRVEHTLRETSRRLELAQTHERA. Residues 151-181 are compositionally biased toward low complexity; the sequence is PSPGRGVPRSPRGSGRSSPAPNLAPASPGPA. A phosphoserine mark is found at Ser-152, Ser-160, Ser-164, Ser-167, Ser-168, and Ser-177. Residues 181-230 adopt a coiled-coil conformation; it reads AQLQLVREQMAAALRRLRELEDQARTLPELQEQVRALRAEKARLLAGRAQ. The segment covering 237-261 has biased composition (basic and acidic residues); sequence AETRPDKLAQLRRLTERLATSERGG. A phosphoserine mark is found at Ser-271, Ser-280, and Ser-293. Positions 367–404 form a coiled coil; the sequence is GVSELLRGRLRELEEAREAAEEAAAGARAQLREATTQT. Low complexity-rich tracts occupy residues 388 to 400 and 494 to 507; these read EAAA…LREA and NGGA…SGSG. 5 ANK repeats span residues 622 to 652, 656 to 690, 695 to 724, 728 to 758, and 762 to 785; these read NGNT…EVNR, AGYS…DVNA, TGQT…DVNA, DGAT…DPAI, and EGTS…LHAH. The segment at 784–821 is disordered; the sequence is AHLSSGQPDTQSESPPGSQTATPGEGECGDNGENPQVQ. Polar residues predominate over residues 787 to 805; sequence SSGQPDTQSESPPGSQTAT.

Strongly expressed in breast, liver, lung, skeletal muscle and kidney.

Functionally, may be involved in the control of cytoskeleton formation by regulating actin polymerization. In Homo sapiens (Human), this protein is KN motif and ankyrin repeat domain-containing protein 3.